The following is a 334-amino-acid chain: Siroheme decarboxylase (334 aa).

His93 is an active-site residue.

This sequence belongs to the Ahb/Nir family.

It catalyses the reaction siroheme + 2 H(+) = 12,18-didecarboxysiroheme + 2 CO2. Its pathway is porphyrin-containing compound metabolism. Its function is as follows. Involved in heme d1 biosynthesis. Catalyzes the decarboxylation of siroheme into didecarboxysiroheme. Siroheme is probably decarboxylated to monodecarboxysiroheme, which is in turn decarboxylated to didecarboxysiroheme. The protein is Siroheme decarboxylase of Hydrogenobacter thermophilus (strain DSM 6534 / IAM 12695 / TK-6).